An 828-amino-acid polypeptide reads, in one-letter code: RNA-directed RNA polymerase 2a (828 aa).

The 114-residue stretch at 515–628 folds into the RdRp catalytic domain; sequence KFCLEIDLSK…FSIKAPVGDP (114 aa). A disordered region spans residues 776–828; it reads SKASRRKAVESNGKHRDPSTRDHSKVGTDESKETSTEETTQTEPQGAGSQKSK. Residues 782 to 810 are compositionally biased toward basic and acidic residues; the sequence is KAVESNGKHRDPSTRDHSKVGTDESKETS.

The protein belongs to the ssRNA positive-strand viruses RNA-directed RNA polymerase family. Interacts with replication protein 1a.

It carries out the reaction RNA(n) + a ribonucleoside 5'-triphosphate = RNA(n+1) + diphosphate. Functionally, RNA-dependent RNA polymerase which replicates the viral genome composed of 3 RNA segments, RNA1, RNA2 and RNA3. The polypeptide is RNA-directed RNA polymerase 2a (Canna (Florist's daisy)).